The sequence spans 384 residues: MAP kinase-activated protein kinase 3 (384 aa).

Position 1 is an N-acetylmethionine (Met-1). Residues 1 to 33 (MDGETAGEKGSLVPPPGALGGSALGGAPAPGVR) form a disordered region. In terms of domain architecture, Protein kinase spans 46-306 (QLSKQVLGLG…IMQFMNHPWI (261 aa)). ATP contacts are provided by residues 52–60 (LGLGVNGKV) and Lys-75. The active-site Proton acceptor is the Asp-168. Phosphothreonine; by MAPK14 is present on Thr-203. A Phosphoserine; by MAPK14 modification is found at Ser-253. Residue Ser-309 is modified to Phosphoserine; by autocatalysis. Residues 309–345 (SMVVPQTPLYTARVLQEDKDHWDDVKEEMTSALATMR) are autoinhibitory helix. Thr-315 bears the Phosphothreonine; by MAPK14 mark. The Nuclear export signal (NES) motif lies at 337 to 346 (MTSALATMRV). The p38 MAPK-binding site stretch occupies residues 347 to 371 (DYDQVKIKDLKTSNNRLLNKRRKKQ). 2 consecutive short sequence motifs (bipartite nuclear localization signal) follow at residues 352-355 (KIKD) and 366-370 (KRRKK). Residues 359-384 (SNNRLLNKRRKKQAGSSSASQGCNNQ) are disordered. Polar residues predominate over residues 372-384 (AGSSSASQGCNNQ).

This sequence belongs to the protein kinase superfamily. CAMK Ser/Thr protein kinase family. As to quaternary structure, heterodimer with p38-alpha/MAPK14. The heterodimer with p38-alpha/MAPK14 forms a stable complex: molecules are positioned 'face to face' so that the ATP-binding sites of both kinases are at the heterodimer interface. Interacts with TCF3 and with polycomb proteins, such as PCH2 and BMI1/PCGF4. In terms of processing, phosphorylated and activated by MAPK1/ERK2 and MAPK3/ERK1. Phosphorylated and activated by MAP kinase p38-alpha/MAPK14 at Thr-201, Ser-251 and Thr-313. Isoform 3 is degraded following phosphorylation at Thr-203. As to expression, ubiquitously expressed (at protein level). Isoform 3 is expressed in skeletal muscles and heart.

It localises to the nucleus. The protein localises to the cytoplasm. It carries out the reaction L-seryl-[protein] + ATP = O-phospho-L-seryl-[protein] + ADP + H(+). The catalysed reaction is L-threonyl-[protein] + ATP = O-phospho-L-threonyl-[protein] + ADP + H(+). With respect to regulation, activated following phosphorylation by p38-alpha/MAPK14 following various stresses. Inhibited by ligand 5B (2'-[2-(1,3-benzodioxol-5-yl)pyrimidin-4-yl]-5',6'-dihydrospiro[piperidine-4,7'-pyrrolo[3,2-c]pyridin]- 4'(1'h)-one) and ligand P4O (2-[2-(2-fluorophenyl)pyridin-4-yl]-1,5,6,7-tetrahydro- 4h-pyrrolo[3,2-c]pyridin-4-one), 2 ATP-competitive inhibitors. Its function is as follows. Stress-activated serine/threonine-protein kinase involved in cytokines production, endocytosis, cell migration, chromatin remodeling and transcriptional regulation. Following stress, it is phosphorylated and activated by MAP kinase p38-alpha/MAPK14, leading to phosphorylation of substrates. Phosphorylates serine in the peptide sequence, Hyd-X-R-X(2)-S, where Hyd is a large hydrophobic residue. MAPKAPK2 and MAPKAPK3, share the same function and substrate specificity, but MAPKAPK3 kinase activity and level in protein expression are lower compared to MAPKAPK2. Phosphorylates HSP27/HSPB1, KRT18, KRT20, RCSD1, RPS6KA3, TAB3 and TTP/ZFP36. Mediates phosphorylation of HSP27/HSPB1 in response to stress, leading to dissociate HSP27/HSPB1 from large small heat-shock protein (sHsps) oligomers and impair their chaperone activities and ability to protect against oxidative stress effectively. Involved in inflammatory response by regulating tumor necrosis factor (TNF) and IL6 production post-transcriptionally: acts by phosphorylating AU-rich elements (AREs)-binding proteins, such as TTP/ZFP36, leading to regulate the stability and translation of TNF and IL6 mRNAs. Phosphorylation of TTP/ZFP36, a major post-transcriptional regulator of TNF, promotes its binding to 14-3-3 proteins and reduces its ARE mRNA affinity leading to inhibition of dependent degradation of ARE-containing transcript. Involved in toll-like receptor signaling pathway (TLR) in dendritic cells: required for acute TLR-induced macropinocytosis by phosphorylating and activating RPS6KA3. Also acts as a modulator of Polycomb-mediated repression. This Mus musculus (Mouse) protein is MAP kinase-activated protein kinase 3 (Mapkapk3).